Reading from the N-terminus, the 334-residue chain is Dihydroorotate dehydrogenase (quinone) (334 aa).

Residues 59 to 63 and Thr83 contribute to the FMN site; that span reads AGLDK. Substrate is bound at residue Lys63. 108 to 112 contributes to the substrate binding site; the sequence is NRMGF. 2 residues coordinate FMN: Asn136 and Asn169. Asn169 provides a ligand contact to substrate. Residue Ser172 is the Nucleophile of the active site. Asn174 is a substrate binding site. Residues Lys214 and Thr242 each contribute to the FMN site. 243–244 is a binding site for substrate; that stretch reads NT. FMN is bound by residues Gly265, Gly294, and 315-316; that span reads YS.

It belongs to the dihydroorotate dehydrogenase family. Type 2 subfamily. In terms of assembly, monomer. It depends on FMN as a cofactor.

It is found in the cell membrane. The enzyme catalyses (S)-dihydroorotate + a quinone = orotate + a quinol. It participates in pyrimidine metabolism; UMP biosynthesis via de novo pathway; orotate from (S)-dihydroorotate (quinone route): step 1/1. Its function is as follows. Catalyzes the conversion of dihydroorotate to orotate with quinone as electron acceptor. This Acinetobacter baylyi (strain ATCC 33305 / BD413 / ADP1) protein is Dihydroorotate dehydrogenase (quinone).